The chain runs to 168 residues: Leukotoxin-activating lysine-acyltransferase LtxC (168 aa).

Residues His-23 and Asp-92 contribute to the active site.

The protein belongs to the RTX toxin acyltransferase family.

It localises to the cytoplasm. The enzyme catalyses a fatty acyl-[ACP] + L-lysyl-[protein] = N(6)-(fatty acyl)-L-lysyl-[protein] + holo-[ACP] + H(+). Functionally, required for full activity and modification of the LtxA leukotoxin. Involved in fatty acid modification of the protoxin at two internal lysine residues, thereby converting it to the active toxin. This chain is Leukotoxin-activating lysine-acyltransferase LtxC, found in Aggregatibacter actinomycetemcomitans (Actinobacillus actinomycetemcomitans).